Here is a 371-residue protein sequence, read N- to C-terminus: Anhydro-N-acetylmuramic acid kinase (371 aa).

Residue 9–16 (GTSLDAVD) coordinates ATP.

The protein belongs to the anhydro-N-acetylmuramic acid kinase family.

The catalysed reaction is 1,6-anhydro-N-acetyl-beta-muramate + ATP + H2O = N-acetyl-D-muramate 6-phosphate + ADP + H(+). Its pathway is amino-sugar metabolism; 1,6-anhydro-N-acetylmuramate degradation. It functions in the pathway cell wall biogenesis; peptidoglycan recycling. Its function is as follows. Catalyzes the specific phosphorylation of 1,6-anhydro-N-acetylmuramic acid (anhMurNAc) with the simultaneous cleavage of the 1,6-anhydro ring, generating MurNAc-6-P. Is required for the utilization of anhMurNAc either imported from the medium or derived from its own cell wall murein, and thus plays a role in cell wall recycling. In Caulobacter vibrioides (strain ATCC 19089 / CIP 103742 / CB 15) (Caulobacter crescentus), this protein is Anhydro-N-acetylmuramic acid kinase.